A 233-amino-acid chain; its full sequence is Phosphonates import ATP-binding protein PhnC 1 (233 aa).

One can recognise an ABC transporter domain in the interval 2 to 227; that stretch reads LSVSGLTKRY…PAAALDREDI (226 aa). 34 to 41 is a binding site for ATP; it reads GRSGAGKT.

It belongs to the ABC transporter superfamily. Phosphonates importer (TC 3.A.1.9.1) family. In terms of assembly, the complex is composed of two ATP-binding proteins (PhnC), two transmembrane proteins (PhnE) and a solute-binding protein (PhnD).

Its subcellular location is the cell membrane. The enzyme catalyses phosphonate(out) + ATP + H2O = phosphonate(in) + ADP + phosphate + H(+). Functionally, part of the ABC transporter complex PhnCDE involved in phosphonates import. Responsible for energy coupling to the transport system. The protein is Phosphonates import ATP-binding protein PhnC 1 of Natronomonas pharaonis (strain ATCC 35678 / DSM 2160 / CIP 103997 / JCM 8858 / NBRC 14720 / NCIMB 2260 / Gabara) (Halobacterium pharaonis).